A 269-amino-acid chain; its full sequence is Microtubule-associated protein RP/EB family member 1 (269 aa).

The region spanning 14–116 (NLSRHDMLAW…FVQWFKKFFD (103 aa)) is the Calponin-homology (CH) domain. The interval 168-190 (RTAVSNKPPAQGISKKPATVGNG) is disordered. In terms of domain architecture, EB1 C-terminal spans 186 to 256 (TVGNGDDESA…LYATDEGFVI (71 aa)).

It belongs to the MAPRE family.

The protein resides in the cytoplasm. Its subcellular location is the cytoskeleton. It is found in the microtubule organizing center. The protein localises to the centrosome. It localises to the golgi apparatus. The protein resides in the spindle. Its subcellular location is the spindle pole. Its function is as follows. Plus-end tracking protein (+TIP) that binds to the plus-end of microtubules and regulates the dynamics of the microtubule cytoskeleton. Promotes cytoplasmic microtubule nucleation and elongation. Involved in mitotic spindle positioning by stabilizing microtubules and promoting dynamic connection between astral microtubules and the cortex during mitotic chromosome segregation. The sequence is that of Microtubule-associated protein RP/EB family member 1 (mapre1) from Xenopus tropicalis (Western clawed frog).